The following is a 910-amino-acid chain: Leucine--tRNA ligase (910 aa).

Residues 42–52 carry the 'HIGH' region motif; it reads PYPSGKLHMGH. The 'KMSKS' region signature appears at 658–662; sequence TMSKS. Lys-661 provides a ligand contact to ATP.

Belongs to the class-I aminoacyl-tRNA synthetase family.

It localises to the cytoplasm. It carries out the reaction tRNA(Leu) + L-leucine + ATP = L-leucyl-tRNA(Leu) + AMP + diphosphate. The sequence is that of Leucine--tRNA ligase from Acidovorax sp. (strain JS42).